A 505-amino-acid chain; its full sequence is Probable cytosol aminopeptidase (505 aa).

Lys-268 and Asp-273 together coordinate Mn(2+). Lys-280 is a catalytic residue. Asp-291, Asp-350, and Glu-352 together coordinate Mn(2+). The active site involves Arg-354.

The protein belongs to the peptidase M17 family. It depends on Mn(2+) as a cofactor.

The protein resides in the cytoplasm. The enzyme catalyses Release of an N-terminal amino acid, Xaa-|-Yaa-, in which Xaa is preferably Leu, but may be other amino acids including Pro although not Arg or Lys, and Yaa may be Pro. Amino acid amides and methyl esters are also readily hydrolyzed, but rates on arylamides are exceedingly low.. It carries out the reaction Release of an N-terminal amino acid, preferentially leucine, but not glutamic or aspartic acids.. Its function is as follows. Presumably involved in the processing and regular turnover of intracellular proteins. Catalyzes the removal of unsubstituted N-terminal amino acids from various peptides. In Syntrophobacter fumaroxidans (strain DSM 10017 / MPOB), this protein is Probable cytosol aminopeptidase.